The following is a 147-amino-acid chain: Deoxyuridine 5'-triphosphate nucleotidohydrolase (147 aa).

Residue Arg24 participates in Mg(2+) binding. DUTP-binding positions include 68-70 (PRS), 82-85 (GVID), Tyr88, Gly93, Ile95, and Arg111.

It belongs to the dUTPase family. Mg(2+) is required as a cofactor.

The catalysed reaction is dUTP + H2O = dUMP + diphosphate + H(+). In terms of biological role, this enzyme is involved in nucleotide metabolism: it produces dUMP, the immediate precursor of thymidine nucleotides and it decreases the intracellular concentration of dUTP so that uracil cannot be incorporated into DNA. In Homo sapiens (Human), this protein is Deoxyuridine 5'-triphosphate nucleotidohydrolase (OPG046).